The sequence spans 415 residues: Ankyrin repeat domain-containing protein 10 (415 aa).

ANK repeat units lie at residues 20–49 (SLRF…RAHL), 56–85 (YGWT…SLNV), 90–119 (YAQT…NINK), and 123–152 (EGET…HTDL). A compositionally biased stretch (polar residues) spans 303 to 325 (TGSNGVSNGQPLSSGQASVSANG). A disordered region spans residues 303 to 330 (TGSNGVSNGQPLSSGQASVSANGTEEPE).

This chain is Ankyrin repeat domain-containing protein 10 (Ankrd10), found in Mus musculus (Mouse).